The following is a 193-amino-acid chain: Nucleoside triphosphate pyrophosphatase (193 aa).

Aspartate 70 (proton acceptor) is an active-site residue.

Belongs to the Maf family. The cofactor is a divalent metal cation.

The protein resides in the cytoplasm. The enzyme catalyses a ribonucleoside 5'-triphosphate + H2O = a ribonucleoside 5'-phosphate + diphosphate + H(+). It carries out the reaction a 2'-deoxyribonucleoside 5'-triphosphate + H2O = a 2'-deoxyribonucleoside 5'-phosphate + diphosphate + H(+). Its function is as follows. Nucleoside triphosphate pyrophosphatase. May have a dual role in cell division arrest and in preventing the incorporation of modified nucleotides into cellular nucleic acids. This is Nucleoside triphosphate pyrophosphatase from Anaplasma phagocytophilum (strain HZ).